The following is a 130-amino-acid chain: Small ribosomal subunit protein uS11 (130 aa).

Belongs to the universal ribosomal protein uS11 family. In terms of assembly, part of the 30S ribosomal subunit. Interacts with proteins S7 and S18. Binds to IF-3.

In terms of biological role, located on the platform of the 30S subunit, it bridges several disparate RNA helices of the 16S rRNA. Forms part of the Shine-Dalgarno cleft in the 70S ribosome. This chain is Small ribosomal subunit protein uS11, found in Prochlorococcus marinus (strain MIT 9215).